Here is a 76-residue protein sequence, read N- to C-terminus: UPF0291 protein BA_1897/GBAA_1897/BAS1759 (76 aa).

Belongs to the UPF0291 family.

The protein localises to the cytoplasm. This Bacillus anthracis protein is UPF0291 protein BA_1897/GBAA_1897/BAS1759.